We begin with the raw amino-acid sequence, 87 residues long: Cytochrome c5 (87 aa).

Residues C19, C22, H23, and M63 each contribute to the heme site. A disulfide bridge connects residues C69 and C72.

The protein belongs to the cytochrome c family. As to quaternary structure, homodimer. Binds 1 heme group per subunit.

Its function is as follows. It is unreactive with cytochrome c reductase or oxidase but seems to function as an intermediate in nitrate respiration of facultative anaerobic pseudmonads. This is Cytochrome c5 from Ectopseudomonas mendocina (Pseudomonas mendocina).